The following is a 313-amino-acid chain: Porphobilinogen deaminase (313 aa).

C242 is modified (S-(dipyrrolylmethanemethyl)cysteine).

Belongs to the HMBS family. As to quaternary structure, monomer. Requires dipyrromethane as cofactor.

The catalysed reaction is 4 porphobilinogen + H2O = hydroxymethylbilane + 4 NH4(+). Its pathway is porphyrin-containing compound metabolism; protoporphyrin-IX biosynthesis; coproporphyrinogen-III from 5-aminolevulinate: step 2/4. Functionally, tetrapolymerization of the monopyrrole PBG into the hydroxymethylbilane pre-uroporphyrinogen in several discrete steps. The chain is Porphobilinogen deaminase from Proteus mirabilis (strain HI4320).